Reading from the N-terminus, the 104-residue chain is NADH-quinone oxidoreductase subunit K (104 aa).

Transmembrane regions (helical) follow at residues 4–24 (VPAS…LFGA), 31–51 (VIVL…FVAF), and 67–87 (LFTM…LIAL).

The protein belongs to the complex I subunit 4L family. NDH-1 is composed of 14 different subunits. Subunits NuoA, H, J, K, L, M, N constitute the membrane sector of the complex.

The protein localises to the cell membrane. The enzyme catalyses a quinone + NADH + 5 H(+)(in) = a quinol + NAD(+) + 4 H(+)(out). NDH-1 shuttles electrons from NADH, via FMN and iron-sulfur (Fe-S) centers, to quinones in the respiratory chain. The immediate electron acceptor for the enzyme in this species is believed to be a menaquinone. Couples the redox reaction to proton translocation (for every two electrons transferred, four hydrogen ions are translocated across the cytoplasmic membrane), and thus conserves the redox energy in a proton gradient. The sequence is that of NADH-quinone oxidoreductase subunit K from Bacillus anthracis (strain A0248).